A 103-amino-acid polypeptide reads, in one-letter code: Cell division protein FtsB (103 aa).

Residues M1–K3 are Cytoplasmic-facing. The helical transmembrane segment at L4–F21 threads the bilayer. The Periplasmic portion of the chain corresponds to G22–R103. Residues N33–G62 are a coiled coil.

The protein belongs to the FtsB family. Part of a complex composed of FtsB, FtsL and FtsQ.

The protein resides in the cell inner membrane. In terms of biological role, essential cell division protein. May link together the upstream cell division proteins, which are predominantly cytoplasmic, with the downstream cell division proteins, which are predominantly periplasmic. This Salmonella arizonae (strain ATCC BAA-731 / CDC346-86 / RSK2980) protein is Cell division protein FtsB.